The primary structure comprises 358 residues: 4-hydroxy-3-methylbut-2-en-1-yl diphosphate synthase (flavodoxin) (358 aa).

Residues Cys270, Cys273, Cys305, and Glu312 each coordinate [4Fe-4S] cluster.

The protein belongs to the IspG family. [4Fe-4S] cluster is required as a cofactor.

It carries out the reaction (2E)-4-hydroxy-3-methylbut-2-enyl diphosphate + oxidized [flavodoxin] + H2O + 2 H(+) = 2-C-methyl-D-erythritol 2,4-cyclic diphosphate + reduced [flavodoxin]. Its pathway is isoprenoid biosynthesis; isopentenyl diphosphate biosynthesis via DXP pathway; isopentenyl diphosphate from 1-deoxy-D-xylulose 5-phosphate: step 5/6. Functionally, converts 2C-methyl-D-erythritol 2,4-cyclodiphosphate (ME-2,4cPP) into 1-hydroxy-2-methyl-2-(E)-butenyl 4-diphosphate. The protein is 4-hydroxy-3-methylbut-2-en-1-yl diphosphate synthase (flavodoxin) of Ruthia magnifica subsp. Calyptogena magnifica.